Here is a 135-residue protein sequence, read N- to C-terminus: ATP synthase epsilon chain (135 aa).

This sequence belongs to the ATPase epsilon chain family. In terms of assembly, F-type ATPases have 2 components, CF(1) - the catalytic core - and CF(0) - the membrane proton channel. CF(1) has five subunits: alpha(3), beta(3), gamma(1), delta(1), epsilon(1). CF(0) has three main subunits: a, b and c.

It localises to the cell inner membrane. Functionally, produces ATP from ADP in the presence of a proton gradient across the membrane. In Rhizobium johnstonii (strain DSM 114642 / LMG 32736 / 3841) (Rhizobium leguminosarum bv. viciae), this protein is ATP synthase epsilon chain.